Consider the following 430-residue polypeptide: Dolichyl-diphosphooligosaccharide--protein glycosyltransferase subunit WBP1 (430 aa).

An N-terminal signal peptide occupies residues 1–20 (MRTDWNFFFCILLQAIFVVG). Topologically, residues 24–393 (SRTLVLYDQS…PRSWEISNSW (370 aa)) are lumenal. Asn60 and Asn332 each carry an N-linked (GlcNAc...) asparagine glycan. Residues 394–414 (VYISAICGVIVAWIFFVVSFV) form a helical membrane-spanning segment. The Cytoplasmic segment spans residues 415-430 (TTSSVGKKLETFKKTN).

It belongs to the DDOST 48 kDa subunit family. Component of the oligosaccharyltransferase (OST) complex, which appears to exist in two assemblies comprising OST1, OST2, OST4, OST5, STT3, SWP1, WPB1, and either OST3 or OST6. OST assembly occurs through the formation of 3 subcomplexes. Subcomplex 1 contains OST1 and OST5, subcomplex 2 contains STT3, OST3, and OST4, and subcomplex 3 contains OST2, WBP1, and SWP1. Interacts with SEC61, SBH1 and SSS1.

The protein resides in the endoplasmic reticulum membrane. It participates in protein modification; protein glycosylation. In terms of biological role, subunit of the oligosaccharyl transferase (OST) complex that catalyzes the initial transfer of a defined glycan (Glc(3)Man(9)GlcNAc(2) in eukaryotes) from the lipid carrier dolichol-pyrophosphate to an asparagine residue within an Asn-X-Ser/Thr consensus motif in nascent polypeptide chains, the first step in protein N-glycosylation. N-glycosylation occurs cotranslationally and the complex associates with the Sec61 complex at the channel-forming translocon complex that mediates protein translocation across the endoplasmic reticulum (ER). All subunits are required for a maximal enzyme activity. The protein is Dolichyl-diphosphooligosaccharide--protein glycosyltransferase subunit WBP1 (WBP1) of Saccharomyces cerevisiae (strain ATCC 204508 / S288c) (Baker's yeast).